The primary structure comprises 258 residues: UPF0328 protein ECU07_0060 (258 aa).

It belongs to the UPF0328 family.

This is UPF0328 protein ECU07_0060 from Encephalitozoon cuniculi (strain GB-M1) (Microsporidian parasite).